The following is a 2495-amino-acid chain: Non-reducing polyketide synthase adrD (2495 aa).

The interval 14–252 (VVFGPQSSEI…HHSRHVTAVQ (239 aa)) is N-terminal acylcarrier protein transacylase domain (SAT). In terms of domain architecture, Ketosynthase family 3 (KS3) spans 386-807 (VIPIAITGMG…GSNAALVVKQ (422 aa)). Active-site for beta-ketoacyl synthase activity residues include Cys551, His686, and His725. Residues 913–1222 (LCFGGQNGNE…QALDLGGALA (310 aa)) form a malonyl-CoA:ACP transacylase (MAT) domain region. Residue Ser1000 is the For acyl/malonyl transferase activity of the active site. Residues 1294-1422 (KEFVQLLTKQ…GEISLHPFGQ (129 aa)) are N-terminal hotdog fold. Positions 1294–1601 (KEFVQLLTKQ…FTSVSIAGLS (308 aa)) constitute a PKS/mFAS DH domain. The segment at 1295-1600 (EFVQLLTKQP…TFTSVSIAGL (306 aa)) is product template (PT) domain. His1325 serves as the catalytic Proton acceptor; for dehydratase activity. Positions 1450–1601 (ESSGLKGFAV…FTSVSIAGLS (152 aa)) are C-terminal hotdog fold. The active-site Proton donor; for dehydratase activity is Asp1508. One can recognise a Carrier domain in the interval 1651 to 1725 (SGHFMVVQEM…TLVQTIFPDA (75 aa)). An O-(pantetheine 4'-phosphoryl)serine modification is found at Ser1685. The interval 1887–2120 (QHTSEHNLLR…GFQWVDWTYN (234 aa)) is methyltransferase (CMeT) domain. The thioesterase (TE) domain stretch occupies residues 2150–2495 (YLMNEETIVY…YEFLRDHVRY (346 aa)). Catalysis depends on for thioesterase activity residues Ser2273 and Asp2432.

It catalyses the reaction 3 malonyl-CoA + acetyl-CoA + 2 S-adenosyl-L-methionine = 3,5-dimethylorsellinate + 2 S-adenosyl-L-homocysteine + 3 CO2 + 4 CoA. The protein operates within secondary metabolite biosynthesis; terpenoid biosynthesis. In terms of biological role, non-reducing polyketide synthase; part of the gene cluster that mediates the biosynthesis of andrastins, meroterpenoid compounds that exhibit inhibitory activity against ras farnesyltransferase, suggesting that they could be promising leads for antitumor agents. The first step of the pathway is the synthesis of 3,5-dimethylorsellinic acid (DMOA) by the polyketide synthase adrD via condensation of one acetyl-CoA starter unit with 3 malonyl-CoA units and 2 methylations. DMAO is then converted to farnesyl-DMAO by the prenyltransferase adrG. The methyltransferase adrK catalyzes the methylation of the carboxyl group of farnesyl-DMAO to farnesyl-DMAO methyl ester which is further converted to epoxyfarnesyl-DMAO methyl ester by the FAD-dependent monooxygenase adrH. The terpene cyclase adrI then catalyzes the carbon skeletal rearrangement to generate the andrastin E, the first compound in the pathway having the andrastin scaffold, with the tetracyclic ring system. The post-cyclization tailoring enzymes adrF, adrE, adrJ, and adrA, are involved in the conversion of andrastin E into andrastin A. The short chain dehydrogenase adrF is responsible for the oxidation of the C-3 a hydroxyl group of andrastin E to yield the corresponding ketone, andrastin D. The ketoreductase adrE stereoselectively reduces the carbonyl moiety to reverse the stereochemistry of the C-3 position to yield andrastin F. The acetyltransferase adrJ is the acetyltransferase that attaches the acetyl group to the C-3 hydroxyl group of andrastin F to yield andrastin C. Finally, the cytochrome P450 monooxygenase adrA catalyzes two sequential oxidation reactions of the C-23 methyl group, to generate the corresponding alcohol andrastin B, and aldehyde andrastin A. The chain is Non-reducing polyketide synthase adrD from Penicillium roqueforti.